The chain runs to 464 residues: tRNA modification GTPase MnmE (464 aa).

(6S)-5-formyl-5,6,7,8-tetrahydrofolate contacts are provided by Arg-29, Glu-91, and Arg-131. In terms of domain architecture, TrmE-type G spans 226–387 (GLKVALAGKP…LINYLLKKCG (162 aa)). Residue Asn-236 participates in K(+) binding. Residues 236-241 (NVGKSS), 255-261 (TDLPGTT), and 280-283 (DTAG) each bind GTP. Ser-240 lines the Mg(2+) pocket. Residues Thr-255, Leu-257, and Thr-260 each coordinate K(+). Thr-261 provides a ligand contact to Mg(2+). Residue Lys-464 coordinates (6S)-5-formyl-5,6,7,8-tetrahydrofolate.

This sequence belongs to the TRAFAC class TrmE-Era-EngA-EngB-Septin-like GTPase superfamily. TrmE GTPase family. As to quaternary structure, homodimer. Heterotetramer of two MnmE and two MnmG subunits. K(+) is required as a cofactor.

The protein resides in the cytoplasm. Functionally, exhibits a very high intrinsic GTPase hydrolysis rate. Involved in the addition of a carboxymethylaminomethyl (cmnm) group at the wobble position (U34) of certain tRNAs, forming tRNA-cmnm(5)s(2)U34. This Prochlorococcus marinus (strain NATL1A) protein is tRNA modification GTPase MnmE.